Here is a 477-residue protein sequence, read N- to C-terminus: Probable F-box protein At5g25300 (477 aa).

Residues 346 to 377 (VDMNKEDSQIEINEKETKINQEHDQSDETQAK) are a coiled coil. Positions 412–458 (SPPWSELPGDILRSVFERLSFVDFQRAKQTCPIKRSKSNCLRLWLIT) constitute an F-box domain.

This is Probable F-box protein At5g25300 from Arabidopsis thaliana (Mouse-ear cress).